A 130-amino-acid polypeptide reads, in one-letter code: Small ribosomal subunit protein uS8 (130 aa).

The protein belongs to the universal ribosomal protein uS8 family. In terms of assembly, part of the 30S ribosomal subunit. Contacts proteins S5 and S12.

One of the primary rRNA binding proteins, it binds directly to 16S rRNA central domain where it helps coordinate assembly of the platform of the 30S subunit. The protein is Small ribosomal subunit protein uS8 of Aeromonas hydrophila subsp. hydrophila (strain ATCC 7966 / DSM 30187 / BCRC 13018 / CCUG 14551 / JCM 1027 / KCTC 2358 / NCIMB 9240 / NCTC 8049).